The primary structure comprises 85 residues: MKTFINKKVSLNKRITFRRRRRKPVQPGERIDYKNLRLLCRFVSKQAKILSRRVSRLTSKQQRTVARYIKSARVLAFMPFVNNET.

The protein belongs to the bacterial ribosomal protein bS18 family. In terms of assembly, part of the 30S ribosomal subunit.

It localises to the plastid. The protein localises to the chloroplast. This Zygnema circumcarinatum (Green alga) protein is Small ribosomal subunit protein bS18c.